The sequence spans 382 residues: Acetylornithine deacetylase (382 aa).

Residue histidine 79 participates in Zn(2+) binding. Aspartate 81 is an active-site residue. Zn(2+) is bound at residue aspartate 111. The active site involves glutamate 143. Positions 144, 168, and 354 each coordinate Zn(2+).

It belongs to the peptidase M20A family. ArgE subfamily. In terms of assembly, homodimer. Zn(2+) is required as a cofactor. It depends on Co(2+) as a cofactor. Glutathione serves as cofactor.

It localises to the cytoplasm. The catalysed reaction is N(2)-acetyl-L-ornithine + H2O = L-ornithine + acetate. The protein operates within amino-acid biosynthesis; L-arginine biosynthesis; L-ornithine from N(2)-acetyl-L-ornithine (linear): step 1/1. In terms of biological role, catalyzes the hydrolysis of the amide bond of N(2)-acetylated L-amino acids. Cleaves the acetyl group from N-acetyl-L-ornithine to form L-ornithine, an intermediate in L-arginine biosynthesis pathway, and a branchpoint in the synthesis of polyamines. This is Acetylornithine deacetylase from Pasteurella multocida (strain Pm70).